We begin with the raw amino-acid sequence, 448 residues long: Trigger factor (448 aa).

The 87-residue stretch at 167–253 folds into the PPIase FKBP-type domain; that stretch reads GSIVRVDFVE…LKDIKRRDIP (87 aa).

Belongs to the FKBP-type PPIase family. Tig subfamily.

The protein localises to the cytoplasm. The catalysed reaction is [protein]-peptidylproline (omega=180) = [protein]-peptidylproline (omega=0). Functionally, involved in protein export. Acts as a chaperone by maintaining the newly synthesized protein in an open conformation. Functions as a peptidyl-prolyl cis-trans isomerase. The polypeptide is Trigger factor (Borrelia turicatae (strain 91E135)).